Consider the following 377-residue polypeptide: Probable multidrug ABC transporter permease YbhS (377 aa).

At Met1–Ser28 the chain is on the cytoplasmic side. The helical transmembrane segment at Trp29–Leu49 threads the bilayer. The Periplasmic portion of the chain corresponds to Asp50 to His181. The 231-residue stretch at Ile145 to Arg375 folds into the ABC transmembrane type-2 domain. The helical transmembrane segment at Phe182 to Leu202 threads the bilayer. The Cytoplasmic segment spans residues Val203–Tyr234. A helical transmembrane segment spans residues Tyr235–Val255. Topologically, residues Pro256–Leu261 are periplasmic. A helical transmembrane segment spans residues Leu262–Ile282. Over Ser283–Asn291 the chain is Cytoplasmic. The chain crosses the membrane as a helical span at residues Ala292 to Phe312. Over Gln313–Asn345 the chain is Periplasmic. A helical membrane pass occupies residues Ile346–Gly366. The Cytoplasmic segment spans residues Leu367–Asp377.

This sequence belongs to the ABC-2 integral membrane protein family. The complex is probably composed of two ATP-binding proteins (YbhF) and two transmembrane proteins (YbhR and YbhS).

The protein resides in the cell inner membrane. Part of the ABC transporter complex YbhFSR that could be involved in efflux of cefoperazone. Probably involved in the translocation of the substrate across the membrane. The polypeptide is Probable multidrug ABC transporter permease YbhS (ybhS) (Escherichia coli O157:H7).